The primary structure comprises 86 residues: Putative membrane protein insertion efficiency factor (86 aa).

Positions 66–86 (PLHEGGDDPVPPRKNDDNREN) are disordered.

It belongs to the UPF0161 family.

It is found in the cell inner membrane. Functionally, could be involved in insertion of integral membrane proteins into the membrane. The sequence is that of Putative membrane protein insertion efficiency factor from Proteus mirabilis (strain HI4320).